The following is a 903-amino-acid chain: Protein translocase subunit SecA (903 aa).

ATP-binding positions include Q87, 105-109, and D507; that span reads GEGKT. Disordered stretches follow at residues 565 to 584 and 855 to 877; these read ESRR…GDPG and AEPG…LASQ. Positions 887, 889, 898, and 899 each coordinate Zn(2+).

It belongs to the SecA family. In terms of assembly, monomer and homodimer. Part of the essential Sec protein translocation apparatus which comprises SecA, SecYEG and auxiliary proteins SecDF-YajC and YidC. The cofactor is Zn(2+).

The protein localises to the cell inner membrane. It localises to the cytoplasm. It catalyses the reaction ATP + H2O + cellular proteinSide 1 = ADP + phosphate + cellular proteinSide 2.. In terms of biological role, part of the Sec protein translocase complex. Interacts with the SecYEG preprotein conducting channel. Has a central role in coupling the hydrolysis of ATP to the transfer of proteins into and across the cell membrane, serving both as a receptor for the preprotein-SecB complex and as an ATP-driven molecular motor driving the stepwise translocation of polypeptide chains across the membrane. This chain is Protein translocase subunit SecA, found in Chromobacterium violaceum (strain ATCC 12472 / DSM 30191 / JCM 1249 / CCUG 213 / NBRC 12614 / NCIMB 9131 / NCTC 9757 / MK).